We begin with the raw amino-acid sequence, 249 residues long: Tetrahydromethanopterin S-methyltransferase subunit D (249 aa).

Transmembrane regions (helical) follow at residues 9-29 (ILWL…VHFV), 47-67 (GTVQ…GFMM), 75-95 (LILA…MIVG), 138-158 (VSFV…ALVY), 183-203 (LVGI…VIPS), and 224-244 (AVIS…IAIS).

Belongs to the MtrD family. In terms of assembly, the complex is composed of 8 subunits; MtrA, MtrB, MtrC, MtrD, MtrE, MtrF, MtrG and MtrH.

It is found in the cell membrane. It carries out the reaction 5-methyl-5,6,7,8-tetrahydromethanopterin + coenzyme M + 2 Na(+)(in) = 5,6,7,8-tetrahydromethanopterin + methyl-coenzyme M + 2 Na(+)(out). It participates in one-carbon metabolism; methanogenesis from CO(2); methyl-coenzyme M from 5,10-methylene-5,6,7,8-tetrahydromethanopterin: step 2/2. Its function is as follows. Part of a complex that catalyzes the formation of methyl-coenzyme M and tetrahydromethanopterin from coenzyme M and methyl-tetrahydromethanopterin. This is an energy-conserving, sodium-ion translocating step. The protein is Tetrahydromethanopterin S-methyltransferase subunit D of Methanosarcina acetivorans (strain ATCC 35395 / DSM 2834 / JCM 12185 / C2A).